A 907-amino-acid chain; its full sequence is Valine--tRNA ligase (907 aa).

The 'HIGH' region signature appears at 45 to 55; it reads PNVTGSLHMGH. The 'KMSKS' region motif lies at 554–558; that stretch reads KMSKS. K557 lines the ATP pocket. The stretch at 838 to 870 forms a coiled coil; sequence GQLIDLEAERARLVKNVSKIEQDIEKISVKLNN.

It belongs to the class-I aminoacyl-tRNA synthetase family. ValS type 1 subfamily. Monomer.

The protein resides in the cytoplasm. The enzyme catalyses tRNA(Val) + L-valine + ATP = L-valyl-tRNA(Val) + AMP + diphosphate. Its function is as follows. Catalyzes the attachment of valine to tRNA(Val). As ValRS can inadvertently accommodate and process structurally similar amino acids such as threonine, to avoid such errors, it has a 'posttransfer' editing activity that hydrolyzes mischarged Thr-tRNA(Val) in a tRNA-dependent manner. The sequence is that of Valine--tRNA ligase from Bartonella quintana (strain Toulouse) (Rochalimaea quintana).